A 494-amino-acid polypeptide reads, in one-letter code: Glycerol kinase (494 aa).

Position 13 (Thr13) interacts with ADP. ATP-binding residues include Thr13, Thr14, and Ser15. Thr13 provides a ligand contact to sn-glycerol 3-phosphate. Arg17 provides a ligand contact to ADP. Residues Arg83, Glu84, Tyr135, and Asp244 each contribute to the sn-glycerol 3-phosphate site. Residues Arg83, Glu84, Tyr135, Asp244, and Gln245 each contribute to the glycerol site. ADP is bound by residues Thr266 and Gly309. The ATP site is built by Thr266, Gly309, Gln313, and Gly410. ADP contacts are provided by Gly410 and Asn414.

The protein belongs to the FGGY kinase family.

The catalysed reaction is glycerol + ATP = sn-glycerol 3-phosphate + ADP + H(+). It functions in the pathway polyol metabolism; glycerol degradation via glycerol kinase pathway; sn-glycerol 3-phosphate from glycerol: step 1/1. Inhibited by fructose 1,6-bisphosphate (FBP). Its function is as follows. Key enzyme in the regulation of glycerol uptake and metabolism. Catalyzes the phosphorylation of glycerol to yield sn-glycerol 3-phosphate. This is Glycerol kinase from Shewanella sp. (strain MR-4).